A 697-amino-acid chain; its full sequence is Long-chain-fatty-acid--CoA ligase 6 (697 aa).

A helical; Signal-anchor for type III membrane protein membrane pass occupies residues L25–T45. Residues H46–M697 lie on the Cytoplasmic side of the membrane.

The protein belongs to the ATP-dependent AMP-binding enzyme family. The cofactor is Mg(2+). In terms of tissue distribution, expressed predominantly in erythrocyte precursors, in particular in reticulocytes, fetal blood cells derived from fetal liver, hemopoietic stem cells from cord blood, bone marrow and brain.

The protein resides in the mitochondrion outer membrane. Its subcellular location is the peroxisome membrane. It localises to the microsome membrane. It is found in the endoplasmic reticulum membrane. It catalyses the reaction a long-chain fatty acid + ATP + CoA = a long-chain fatty acyl-CoA + AMP + diphosphate. The enzyme catalyses (5Z,8Z,11Z,14Z)-eicosatetraenoate + ATP + CoA = (5Z,8Z,11Z,14Z)-eicosatetraenoyl-CoA + AMP + diphosphate. It carries out the reaction hexadecanoate + ATP + CoA = hexadecanoyl-CoA + AMP + diphosphate. The catalysed reaction is (E)-hexadec-2-enoate + ATP + CoA = (2E)-hexadecenoyl-CoA + AMP + diphosphate. It catalyses the reaction 15-hydroxy-(5Z,8Z,11Z,13E)-eicosatetraenoate + ATP + CoA = 15-hydroxy-(5Z,8Z,11Z,13E)-eicosatetraenoyl-CoA + AMP + diphosphate. The enzyme catalyses 12-hydroxy-(5Z,8Z,10E,14Z)-eicosatetraenoate + ATP + CoA = 12-hydroxy-(5Z,8Z,10E,14Z)-eicosatetraenoyl-CoA + AMP + diphosphate. It carries out the reaction 5-hydroxy-(6E,8Z,11Z,14Z)-eicosatetraenoate + ATP + CoA = 5-hydroxy-(6E,8Z,11Z,14Z)-eicosatetraenoyl-CoA + AMP + diphosphate. Catalyzes the conversion of long-chain fatty acids to their active form acyl-CoA for both synthesis of cellular lipids, and degradation via beta-oxidation. Plays an important role in fatty acid metabolism in brain and the acyl-CoAs produced may be utilized exclusively for the synthesis of the brain lipid. This chain is Long-chain-fatty-acid--CoA ligase 6, found in Homo sapiens (Human).